The chain runs to 282 residues: 4-hydroxybenzoate octaprenyltransferase (282 aa).

The next 9 helical transmembrane spans lie at 17-37 (IGIL…NQGF), 40-60 (IDLL…GCVI), 90-110 (AFIL…KLPI), 113-133 (FYFA…KRFL), 135-155 (APQL…FIAS), 163-183 (FVVL…MYAM), 207-227 (LIIA…AINK), 231-251 (WFFY…LKLI), and 262-282 (AFLV…LALI).

The protein belongs to the UbiA prenyltransferase family. Mg(2+) serves as cofactor.

The protein resides in the cell inner membrane. The catalysed reaction is all-trans-octaprenyl diphosphate + 4-hydroxybenzoate = 4-hydroxy-3-(all-trans-octaprenyl)benzoate + diphosphate. It participates in cofactor biosynthesis; ubiquinone biosynthesis. In terms of biological role, catalyzes the prenylation of para-hydroxybenzoate (PHB) with an all-trans polyprenyl group. Mediates the second step in the final reaction sequence of ubiquinone-8 (UQ-8) biosynthesis, which is the condensation of the polyisoprenoid side chain with PHB, generating the first membrane-bound Q intermediate 3-octaprenyl-4-hydroxybenzoate. The chain is 4-hydroxybenzoate octaprenyltransferase from Legionella pneumophila (strain Paris).